We begin with the raw amino-acid sequence, 344 residues long: DNA-directed RNA polymerase subunit alpha (344 aa).

The interval 1–246 is alpha N-terminal domain (alpha-NTD); the sequence is MPVEKFLKDF…EFLFPLIDFE (246 aa). The alpha C-terminal domain (alpha-CTD) stretch occupies residues 259 to 344; it reads ESSNLLDMSI…VLSKNVKISE (86 aa).

This sequence belongs to the RNA polymerase alpha chain family. As to quaternary structure, homodimer. The RNAP catalytic core consists of 2 alpha, 1 beta, 1 beta' and 1 omega subunit. When a sigma factor is associated with the core the holoenzyme is formed, which can initiate transcription.

The catalysed reaction is RNA(n) + a ribonucleoside 5'-triphosphate = RNA(n+1) + diphosphate. Functionally, DNA-dependent RNA polymerase catalyzes the transcription of DNA into RNA using the four ribonucleoside triphosphates as substrates. The polypeptide is DNA-directed RNA polymerase subunit alpha (Borrelia garinii subsp. bavariensis (strain ATCC BAA-2496 / DSM 23469 / PBi) (Borreliella bavariensis)).